The sequence spans 358 residues: tRNA-specific 2-thiouridylase MnmA (358 aa).

Residues 7 to 14 (AMSGGVDS) and Leu33 each bind ATP. Cys101 (nucleophile) is an active-site residue. Residues Cys101 and Cys197 are joined by a disulfide bond. Position 125 (Gly125) interacts with ATP. The interaction with tRNA stretch occupies residues 147-149 (KDQ). Cys197 serves as the catalytic Cysteine persulfide intermediate.

This sequence belongs to the MnmA/TRMU family.

It localises to the cytoplasm. It catalyses the reaction S-sulfanyl-L-cysteinyl-[protein] + uridine(34) in tRNA + AH2 + ATP = 2-thiouridine(34) in tRNA + L-cysteinyl-[protein] + A + AMP + diphosphate + H(+). Functionally, catalyzes the 2-thiolation of uridine at the wobble position (U34) of tRNA, leading to the formation of s(2)U34. This chain is tRNA-specific 2-thiouridylase MnmA, found in Rickettsia typhi (strain ATCC VR-144 / Wilmington).